Consider the following 304-residue polypeptide: Nod factor export ATP-binding protein I (304 aa).

Residues 6 to 236 enclose the ABC transporter domain; sequence IDFQQVEKRY…EIGCDVIEIY (231 aa). 38 to 45 is an ATP binding site; sequence GPNGAGKT.

Belongs to the ABC transporter superfamily. Lipooligosaccharide exporter (TC 3.A.1.102) family. The complex is composed of two ATP-binding proteins (NodI) and two transmembrane proteins (NodJ).

The protein localises to the cell inner membrane. In terms of biological role, part of the ABC transporter complex NodIJ involved in the export of the nodulation factors (Nod factors), the bacterial signal molecules that induce symbiosis and subsequent nodulation induction. Nod factors are LCO (lipo-chitin oligosaccharide), a modified beta-1,4-linked N-acetylglucosamine oligosaccharide. This subunit is responsible for energy coupling to the transport system. The protein is Nod factor export ATP-binding protein I of Burkholderia thailandensis (strain ATCC 700388 / DSM 13276 / CCUG 48851 / CIP 106301 / E264).